The following is a 31-amino-acid chain: Cyclotide vico-B (31 aa).

Residues 1–31 constitute a cross-link (cyclopeptide (Gly-Asn)); it reads GSIPCAESCVYIPCITGIAGCSCKNKVCYYN. 3 disulfides stabilise this stretch: Cys-5–Cys-21, Cys-9–Cys-23, and Cys-14–Cys-28.

This sequence belongs to the cyclotide family. Bracelet subfamily. This is a cyclic peptide.

Its function is as follows. Probably participates in a plant defense mechanism. The polypeptide is Cyclotide vico-B (Viola cotyledon (Violeta)).